A 96-amino-acid chain; its full sequence is Co-chaperonin GroES (96 aa).

The protein belongs to the GroES chaperonin family. Heptamer of 7 subunits arranged in a ring. Interacts with the chaperonin GroEL.

The protein localises to the cytoplasm. Functionally, together with the chaperonin GroEL, plays an essential role in assisting protein folding. The GroEL-GroES system forms a nano-cage that allows encapsulation of the non-native substrate proteins and provides a physical environment optimized to promote and accelerate protein folding. GroES binds to the apical surface of the GroEL ring, thereby capping the opening of the GroEL channel. This Aromatoleum aromaticum (strain DSM 19018 / LMG 30748 / EbN1) (Azoarcus sp. (strain EbN1)) protein is Co-chaperonin GroES.